Consider the following 181-residue polypeptide: MPKGGRKGGHKGRARQYTSPEEIDAQLQAEKQKAREEEEQKEGGDGAAGDPKKEKKSLDSDESEDEEDDYQQKRKGVEGLIDIENPNRVAQTTKKVTQLDLDGPKELSRREREEIEKQKAKERYMKMHLAGKTEQAKADLARLAIIRKQREEAARKKEEERKAKDDATLSGKRMQSLSLNK.

The segment covering 1-14 (MPKGGRKGGHKGRA) has biased composition (basic residues). The segment at 1 to 117 (MPKGGRKGGH…SRREREEIEK (117 aa)) is disordered. Threonine 18 is subject to Phosphothreonine. Position 19 is a phosphoserine (serine 19). Residues 30–59 (EKQKAREEEEQKEGGDGAAGDPKKEKKSLD) show a composition bias toward basic and acidic residues. Residue lysine 52 forms a Glycyl lysine isopeptide (Lys-Gly) (interchain with G-Cter in SUMO2) linkage. Phosphoserine occurs at positions 57, 60, and 63. Positions 60-69 (SDESEDEEDD) are enriched in acidic residues. At tyrosine 70 the chain carries Phosphotyrosine. A compositionally biased stretch (basic and acidic residues) spans 102–117 (DGPKELSRREREEIEK). Position 126 is an N6-methyllysine (lysine 126). N6-acetyllysine occurs at positions 132 and 164. A compositionally biased stretch (basic and acidic residues) spans 151–167 (EEAARKKEEERKAKDDA). Residues 151–181 (EEAARKKEEERKAKDDATLSGKRMQSLSLNK) form a disordered region. A phosphoserine mark is found at serine 176 and serine 178.

The protein belongs to the PDAP1 family.

Functionally, enhances PDGFA-stimulated cell growth in fibroblasts, but inhibits the mitogenic effect of PDGFB. The sequence is that of 28 kDa heat- and acid-stable phosphoprotein (PDAP1) from Homo sapiens (Human).